Consider the following 449-residue polypeptide: Myb-related protein Pp1 (449 aa).

An HTH myb-type domain is found at 1–30; sequence LGNRWSAIAIPRRTDNEIKNYWNTHLKKRL. The H-T-H motif DNA-binding region spans 5 to 26; sequence WSAIAIPRRTDNEIKNYWNTHL.

It is found in the nucleus. In terms of biological role, possible transcription activator. This Physcomitrium patens (Spreading-leaved earth moss) protein is Myb-related protein Pp1 (PP1).